We begin with the raw amino-acid sequence, 101 residues long: Small ribosomal subunit protein uS14 (101 aa).

This sequence belongs to the universal ribosomal protein uS14 family. Part of the 30S ribosomal subunit. Contacts proteins S3 and S10.

In terms of biological role, binds 16S rRNA, required for the assembly of 30S particles and may also be responsible for determining the conformation of the 16S rRNA at the A site. This chain is Small ribosomal subunit protein uS14, found in Cupriavidus pinatubonensis (strain JMP 134 / LMG 1197) (Cupriavidus necator (strain JMP 134)).